We begin with the raw amino-acid sequence, 163 residues long: Epithelial membrane protein 3 (163 aa).

A helical transmembrane segment spans residues 4–24; the sequence is LLLVVSALHILILVLLFVATL. N-linked (GlcNAc...) asparagine glycosylation is found at N46 and N56. The next 3 membrane-spanning stretches (helical) occupy residues 66–86, 100–120, and 139–159; these read VQAL…LFMI, TGLC…IYAI, and FALA…YIHL.

It belongs to the PMP-22/EMP/MP20 family.

Its subcellular location is the membrane. Functionally, probably involved in cell proliferation and cell-cell interactions. The polypeptide is Epithelial membrane protein 3 (Emp3) (Rattus norvegicus (Rat)).